A 423-amino-acid chain; its full sequence is Elongation factor 1-alpha (423 aa).

One can recognise a tr-type G domain in the interval lysine 5–threonine 211. A G1 region spans residues glycine 14–serine 21. Residue glycine 14–serine 21 coordinates GTP. Serine 21 provides a ligand contact to Mg(2+). The interval glycine 60–aspartate 64 is G2. Positions aspartate 81–glycine 84 are G3. GTP is bound by residues aspartate 81–histidine 85 and asparagine 136–aspartate 139. The interval asparagine 136–aspartate 139 is G4. The segment at serine 175–phenylalanine 177 is G5.

The protein belongs to the TRAFAC class translation factor GTPase superfamily. Classic translation factor GTPase family. EF-Tu/EF-1A subfamily.

The protein resides in the cytoplasm. The catalysed reaction is GTP + H2O = GDP + phosphate + H(+). Its function is as follows. GTP hydrolase that promotes the GTP-dependent binding of aminoacyl-tRNA to the A-site of ribosomes during protein biosynthesis. The polypeptide is Elongation factor 1-alpha (Methanopyrus kandleri (strain AV19 / DSM 6324 / JCM 9639 / NBRC 100938)).